The following is a 301-amino-acid chain: Light-independent protochlorophyllide reductase iron-sulfur ATP-binding protein (301 aa).

Positions 1–13 are enriched in low complexity; that stretch reads MNVTLRPPLAAAP. The tract at residues 1 to 22 is disordered; that stretch reads MNVTLRPPLAAAPRRPDGAGSV. ATP is bound by residues 45-50 and Lys74; that span reads GIGKST. Residue Ser49 coordinates Mg(2+). 2 residues coordinate [4Fe-4S] cluster: Cys130 and Cys164. Residues 215-216 and 239-241 each bind ATP; these read NR and PDL.

Belongs to the NifH/BchL/ChlL family. In terms of assembly, homodimer. Protochlorophyllide reductase is composed of three subunits; BchL, BchN and BchB. [4Fe-4S] cluster serves as cofactor.

The catalysed reaction is chlorophyllide a + oxidized 2[4Fe-4S]-[ferredoxin] + 2 ADP + 2 phosphate = protochlorophyllide a + reduced 2[4Fe-4S]-[ferredoxin] + 2 ATP + 2 H2O. The protein operates within porphyrin-containing compound metabolism; bacteriochlorophyll biosynthesis (light-independent). Component of the dark-operative protochlorophyllide reductase (DPOR) that uses Mg-ATP and reduced ferredoxin to reduce ring D of protochlorophyllide (Pchlide) to form chlorophyllide a (Chlide). This reaction is light-independent. The L component serves as a unique electron donor to the NB-component of the complex, and binds Mg-ATP. This is Light-independent protochlorophyllide reductase iron-sulfur ATP-binding protein from Bradyrhizobium sp. (strain ORS 278).